We begin with the raw amino-acid sequence, 726 residues long: MRSNTFGSVMRISWVVAFITMVQTLVSGVPLTDNDLESEVSKGTWFIKYYLPSCGACKRLGPMWDNMVEKAKEQVEGSNFHFGEVDCSKELSSCANIRAVPTLYLYQNGEIVEEVPFGASTSEASLLDFVETHLNPDTDPDIPSDEDVLTDEDTEEVASIQPALSTSVSSLSLASTAMSKSASASEFSGSSVTKASKKLTSSPTSVASKKATLSSVSKVASTSSLPVTSVSASVDPKSAASKVQDAEFSIQTAPSFPKEKEEKENTEETEESKKSINPTGTSKALALDADIDAALTDKEGWFIQFYSSECDDCDDVSTAWYAMANRMRGKLNVAHINCAVSKRACKQYSIQYFPTFLFFKEEAFVEYVGLPNEGDLVSFAEEAANFEIREVELLDTVNAEKNGDVFFLYFYDDDSAEYLNIIRKTGIQLLGHANLYLTTSQQIAKKYRVVSFPKLIVVRDGIASYYPAKMAQDNKDYRRILGWMKNNWLPVLPELRTSNSKEIFNDESVVLFLLNPELDDFDETKRTAQKIATEFLDEEGRTYQSNWQKETDKKNSLVNEAEEKNDLEAIEAAKNFHVNGKPSPTRFAWVNGKFWAQWLRKFDIDIEATGPRVIVYNAAQDIYWDETAKGTPISIEKDTVFDIIKQVETDPDHLKFKILKKNLGVEYLESYGLNIRVLYMVLGIVTVGILVWYFSGRRARTLQRRRHSTPILPVSMRSTGNSGKFD.

The Thioredoxin domain occupies 10 to 135; that stretch reads MRISWVVAFI…LLDFVETHLN (126 aa). Disordered stretches follow at residues 133–153 and 227–280; these read HLNP…TDED and VTSV…NPTG. Over residues 138–153 the composition is skewed to acidic residues; it reads TDPDIPSDEDVLTDED. A helical transmembrane segment spans residues 675–695; that stretch reads IRVLYMVLGIVTVGILVWYFS. Serine 708 carries the post-translational modification Phosphoserine.

It localises to the membrane. This is an uncharacterized protein from Schizosaccharomyces pombe (strain 972 / ATCC 24843) (Fission yeast).